Reading from the N-terminus, the 444-residue chain is Trigger factor (444 aa).

Residues 160 to 245 (DMQVTFDFEG…VKQVEKPKLP (86 aa)) enclose the PPIase FKBP-type domain.

This sequence belongs to the FKBP-type PPIase family. Tig subfamily.

It is found in the cytoplasm. It catalyses the reaction [protein]-peptidylproline (omega=180) = [protein]-peptidylproline (omega=0). Its function is as follows. Involved in protein export. Acts as a chaperone by maintaining the newly synthesized protein in an open conformation. Functions as a peptidyl-prolyl cis-trans isomerase. This Acinetobacter baumannii (strain AB0057) protein is Trigger factor.